The chain runs to 265 residues: Elongation factor 1-delta (265 aa).

A compositionally biased stretch (polar residues) spans 31–54 (MGSASNKPHNSPQSAASALSNSGD). Disordered stretches follow at residues 31–64 (MGSASNKPHNSPQSAASALSNSGDGSELAARVAN) and 118–155 (KVQVTPAAKEENGTGEDDDDDDDIDLFGSDNEEEDAEA). Positions 130-153 (GTGEDDDDDDDIDLFGSDNEEEDA) are enriched in acidic residues.

This sequence belongs to the EF-1-beta/EF-1-delta family. In terms of assembly, EF-1 is composed of 4 subunits: alpha, beta, delta, and gamma.

Its function is as follows. EF-1-beta and EF-1-delta stimulate the exchange of GDP bound to EF-1-alpha to GTP. In Xenopus laevis (African clawed frog), this protein is Elongation factor 1-delta (eef1d).